Here is a 92-residue protein sequence, read N- to C-terminus: Probable Fe(2+)-trafficking protein (92 aa).

The protein belongs to the Fe(2+)-trafficking protein family.

Its function is as follows. Could be a mediator in iron transactions between iron acquisition and iron-requiring processes, such as synthesis and/or repair of Fe-S clusters in biosynthetic enzymes. This Shewanella loihica (strain ATCC BAA-1088 / PV-4) protein is Probable Fe(2+)-trafficking protein.